A 590-amino-acid polypeptide reads, in one-letter code: Muscarinic acetylcholine receptor M3 (590 aa).

Residues 1-67 (MTLHNNNTTS…DPLGGHTIWQ (67 aa)) lie on the Extracellular side of the membrane. 6 N-linked (GlcNAc...) asparagine glycosylation sites follow: Asn-6, Asn-7, Asn-15, Asn-41, Asn-48, and Asn-53. Residues 68 to 91 (VVFIAFLTGILALVTIIGNILVIV) traverse the membrane as a helical segment. Over 92–104 (AFKVNKQLKTVNN) the chain is Cytoplasmic. Residues 105-130 (YFLLSLACADLIIGVISMNLFTTYII) traverse the membrane as a helical segment. Topologically, residues 131–142 (MNRWALGNLACD) are extracellular. A disulfide bridge links Cys-141 with Cys-221. A helical transmembrane segment spans residues 143-164 (LWLSIDYVASNASVMNLLVISF). The Cytoplasmic segment spans residues 165–184 (DRYFSITRPLTYRAKRTTKR). A helical membrane pass occupies residues 185-206 (AGVMIGLAWVISFILWAPAILF). The Extracellular segment spans residues 207–229 (WQYFVGKRTVPPGECFIQFLSEP). A helical membrane pass occupies residues 230–252 (TITFGTAIAAFYMPVTIMTILYW). Over 253–491 (RIYKETEKRT…SLIKEKKAAQ (239 aa)) the chain is Cytoplasmic. A Basolateral sorting signal motif is present at residues 275-281 (AEAENFV). Residues 324 to 357 (AEQMDQDHSSSDSWNNNDAAASLENSASSDEEDI) are disordered. Residues 334-345 (SDSWNNNDAAAS) are compositionally biased toward low complexity. Phosphoserine is present on Ser-385. Residues 492 to 514 (TLSAILLAFIITWTPYNIMVLVN) form a helical membrane-spanning segment. The Extracellular segment spans residues 515–526 (TFCDSCIPKTYW). Residues Cys-517 and Cys-520 are joined by a disulfide bond. A helical membrane pass occupies residues 527–546 (NLGYWLCYINSTVNPVCYAL). At 547–590 (CNKTFRTTFKMLLLCQCDKRKRRKQQYQQRQSVIFHKRVPEQAL) the chain is on the cytoplasmic side.

This sequence belongs to the G-protein coupled receptor 1 family. Muscarinic acetylcholine receptor subfamily. CHRM3 sub-subfamily. In terms of assembly, homodimer; the dimers can form tetramers. Interacts with NALCN. Interacts with TMEM147.

The protein localises to the cell membrane. It localises to the postsynaptic cell membrane. The protein resides in the basolateral cell membrane. Its subcellular location is the endoplasmic reticulum membrane. Its function is as follows. The muscarinic acetylcholine receptor mediates various cellular responses, including inhibition of adenylate cyclase, breakdown of phosphoinositides and modulation of potassium channels through the action of G proteins. Primary transducing effect is Pi turnover. The protein is Muscarinic acetylcholine receptor M3 (CHRM3) of Sus scrofa (Pig).